Consider the following 204-residue polypeptide: Holliday junction branch migration complex subunit RuvA (204 aa).

The domain I stretch occupies residues 1–65; it reads MIGRLRGAVA…SAGLRLYGFG (65 aa). Residues 66 to 142 are domain II; that stretch reads TREDRRAFVL…PITDGPVLMT (77 aa). A flexible linker region spans residues 143–152; the sequence is APGAVAAAPA. Positions 152-204 are domain III; the sequence is AKAAPTGDAVAALMGLGVAEVNARRVVEAAAAKLGDEATVQALIKAGLQELGR.

This sequence belongs to the RuvA family. As to quaternary structure, homotetramer. Forms an RuvA(8)-RuvB(12)-Holliday junction (HJ) complex. HJ DNA is sandwiched between 2 RuvA tetramers; dsDNA enters through RuvA and exits via RuvB. An RuvB hexamer assembles on each DNA strand where it exits the tetramer. Each RuvB hexamer is contacted by two RuvA subunits (via domain III) on 2 adjacent RuvB subunits; this complex drives branch migration. In the full resolvosome a probable DNA-RuvA(4)-RuvB(12)-RuvC(2) complex forms which resolves the HJ.

It is found in the cytoplasm. The RuvA-RuvB-RuvC complex processes Holliday junction (HJ) DNA during genetic recombination and DNA repair, while the RuvA-RuvB complex plays an important role in the rescue of blocked DNA replication forks via replication fork reversal (RFR). RuvA specifically binds to HJ cruciform DNA, conferring on it an open structure. The RuvB hexamer acts as an ATP-dependent pump, pulling dsDNA into and through the RuvAB complex. HJ branch migration allows RuvC to scan DNA until it finds its consensus sequence, where it cleaves and resolves the cruciform DNA. The protein is Holliday junction branch migration complex subunit RuvA of Caulobacter sp. (strain K31).